The following is an 800-amino-acid chain: Protein PET111, mitochondrial (800 aa).

The protein to yeast YHR160C.

The protein resides in the mitochondrion matrix. Its function is as follows. Required for translation of the mitochondrial gene for cytochrome c oxidase subunit II (COX2). The chain is Protein PET111, mitochondrial (PET111) from Saccharomyces cerevisiae (strain ATCC 204508 / S288c) (Baker's yeast).